The sequence spans 231 residues: Protein crossbronx homolog (231 aa).

Residues 14–168 (LQEYKILTEY…VEECVRLSQA (155 aa)) form the UBC core domain.

Belongs to the ubiquitin-conjugating enzyme family. FTS subfamily.

This chain is Protein crossbronx homolog, found in Culex quinquefasciatus (Southern house mosquito).